Here is a 197-residue protein sequence, read N- to C-terminus: GTP cyclohydrolase-2 (197 aa).

50-54 is a binding site for GTP; it reads RIHSE. Residues cysteine 55, cysteine 66, and cysteine 68 each coordinate Zn(2+). Residues glutamine 71, 93–95, and threonine 115 each bind GTP; that span reads EGR. Residue aspartate 127 is the Proton acceptor of the active site. The active-site Nucleophile is arginine 129. The GTP site is built by threonine 150 and lysine 155.

This sequence belongs to the GTP cyclohydrolase II family. It depends on Zn(2+) as a cofactor.

The catalysed reaction is GTP + 4 H2O = 2,5-diamino-6-hydroxy-4-(5-phosphoribosylamino)-pyrimidine + formate + 2 phosphate + 3 H(+). The protein operates within cofactor biosynthesis; riboflavin biosynthesis; 5-amino-6-(D-ribitylamino)uracil from GTP: step 1/4. Catalyzes the conversion of GTP to 2,5-diamino-6-ribosylamino-4(3H)-pyrimidinone 5'-phosphate (DARP), formate and pyrophosphate. In Neisseria meningitidis serogroup C (strain 053442), this protein is GTP cyclohydrolase-2.